The sequence spans 495 residues: D-hydantoinase/dihydropyrimidinase (495 aa).

Zn(2+) contacts are provided by H59, H61, and K150. K150 is subject to N6-carboxylysine. Y155 contributes to the substrate binding site. Positions 183 and 239 each coordinate Zn(2+). A substrate-binding site is contributed by S289. Residue D316 coordinates Zn(2+). Residue N337 participates in substrate binding.

The protein belongs to the metallo-dependent hydrolases superfamily. Hydantoinase/dihydropyrimidinase family. As to quaternary structure, homotetramer. It depends on Zn(2+) as a cofactor. Post-translationally, carboxylation allows a single lysine to coordinate two zinc ions.

The enzyme catalyses 5,6-dihydrouracil + H2O = 3-(carbamoylamino)propanoate + H(+). In terms of biological role, catalyzes the hydrolysis of dihydropyrimidines and of the structurally related DL-5-mono-substituted hydantoins, to produce N-carbamoyl-D-amino acids. The chain is D-hydantoinase/dihydropyrimidinase from Pseudomonas putida (Arthrobacter siderocapsulatus).